The chain runs to 187 residues: Ribose 1,5-bisphosphate phosphokinase PhnN (187 aa).

10-17 (GPSGSGKD) serves as a coordination point for ATP.

It belongs to the ribose 1,5-bisphosphokinase family.

It catalyses the reaction alpha-D-ribose 1,5-bisphosphate + ATP = 5-phospho-alpha-D-ribose 1-diphosphate + ADP. It participates in metabolic intermediate biosynthesis; 5-phospho-alpha-D-ribose 1-diphosphate biosynthesis; 5-phospho-alpha-D-ribose 1-diphosphate from D-ribose 5-phosphate (route II): step 3/3. Its function is as follows. Catalyzes the phosphorylation of ribose 1,5-bisphosphate to 5-phospho-D-ribosyl alpha-1-diphosphate (PRPP). The polypeptide is Ribose 1,5-bisphosphate phosphokinase PhnN (Klebsiella pneumoniae subsp. pneumoniae (strain ATCC 700721 / MGH 78578)).